Reading from the N-terminus, the 483-residue chain is Cobyric acid synthase (483 aa).

The GATase cobBQ-type domain maps to 248-435; sequence VLKVVVPVLP…LHGLFETAAA (188 aa). Cys-329 acts as the Nucleophile in catalysis. Residue His-427 is part of the active site.

The protein belongs to the CobB/CobQ family. CobQ subfamily.

The protein operates within cofactor biosynthesis; adenosylcobalamin biosynthesis. Catalyzes amidations at positions B, D, E, and G on adenosylcobyrinic A,C-diamide. NH(2) groups are provided by glutamine, and one molecule of ATP is hydrogenolyzed for each amidation. The sequence is that of Cobyric acid synthase from Pseudomonas fluorescens (strain SBW25).